The chain runs to 209 residues: Ribosomal RNA large subunit methyltransferase E (209 aa).

Residues Gly63, Trp65, Asp83, Asp99, and Asp124 each coordinate S-adenosyl-L-methionine. The Proton acceptor role is filled by Lys164.

The protein belongs to the class I-like SAM-binding methyltransferase superfamily. RNA methyltransferase RlmE family.

The protein localises to the cytoplasm. It carries out the reaction uridine(2552) in 23S rRNA + S-adenosyl-L-methionine = 2'-O-methyluridine(2552) in 23S rRNA + S-adenosyl-L-homocysteine + H(+). In terms of biological role, specifically methylates the uridine in position 2552 of 23S rRNA at the 2'-O position of the ribose in the fully assembled 50S ribosomal subunit. The chain is Ribosomal RNA large subunit methyltransferase E from Colwellia psychrerythraea (strain 34H / ATCC BAA-681) (Vibrio psychroerythus).